The chain runs to 1078 residues: Zinc finger protein 827 (1078 aa).

Residues 1–10 (MPRRKQEQPK) show a composition bias toward basic and acidic residues. Residues 1–14 (MPRRKQEQPKRLPS) are mediates direct interaction with RBBP4. Residues 1 to 76 (MPRRKQEQPK…PDTSLGSATP (76 aa)) are disordered. The RRK motif; mediates NuRD recruitment to telomeres motif lies at 3–5 (RRK). Polar residues-rich tracts occupy residues 33–42 (YGNSSETPSE) and 62–76 (EQST…SATP). Residues lysine 175, lysine 215, and lysine 225 each participate in a glycyl lysine isopeptide (Lys-Gly) (interchain with G-Cter in SUMO2) cross-link. Residues 307 to 341 (SLLPDDPLPLPSSEKKPEKVTPPPPPPPPTAQPPQ) are disordered. The segment covering 326–338 (VTPPPPPPPPTAQ) has biased composition (pro residues). Glycyl lysine isopeptide (Lys-Gly) (interchain with G-Cter in SUMO2) cross-links involve residues lysine 357 and lysine 369. 3 consecutive C2H2-type zinc fingers follow at residues 371–393 (FQCP…MVIH), 399–421 (HQCP…MKVH), and 430–452 (FQCQ…MRCH). Residues lysine 463, lysine 472, lysine 520, lysine 546, lysine 577, lysine 584, and lysine 594 each participate in a glycyl lysine isopeptide (Lys-Gly) (interchain with G-Cter in SUMO2) cross-link. A disordered region spans residues 466-490 (IPDPDVKGSPHLSDSGCLGQQREGG). The disordered stretch occupies residues 594–640 (KEEPKEEESLSMPLPRSSYVFSPEPEVSTPSVSEDPLTPQEGKGSVL). Residues 613–627 (VFSPEPEVSTPSVSE) show a composition bias toward low complexity. Glycyl lysine isopeptide (Lys-Gly) (interchain with G-Cter in SUMO2) cross-links involve residues lysine 636 and lysine 655. Residue lysine 670 forms a Glycyl lysine isopeptide (Lys-Gly) (interchain with G-Cter in SUMO1); alternate linkage. A Glycyl lysine isopeptide (Lys-Gly) (interchain with G-Cter in SUMO2); alternate cross-link involves residue lysine 670. Residues lysine 701, lysine 707, lysine 739, lysine 775, and lysine 795 each participate in a glycyl lysine isopeptide (Lys-Gly) (interchain with G-Cter in SUMO2) cross-link. C2H2-type zinc fingers lie at residues 814–836 (FPCD…LSLH) and 842–864 (YKCH…LTVH). Glycyl lysine isopeptide (Lys-Gly) (interchain with G-Cter in SUMO2) cross-links involve residues lysine 867 and lysine 888. C2H2-type zinc fingers lie at residues 894–916 (YSCH…MSLH) and 926–949 (ICCT…GTKH). The segment covering 945 to 957 (IGTKHTGDDRKTP) has biased composition (basic and acidic residues). The disordered stretch occupies residues 945–990 (IGTKHTGDDRKTPSESNSPSSSSLSTLSDSANGKDDSDSSQKNKGG). Lysine 955 is covalently cross-linked (Glycyl lysine isopeptide (Lys-Gly) (interchain with G-Cter in SUMO2)). The span at 958 to 974 (SESNSPSSSSLSTLSDS) shows a compositional bias: low complexity. The segment covering 976–985 (NGKDDSDSSQ) has biased composition (basic and acidic residues). Lysine 1011 participates in a covalent cross-link: Glycyl lysine isopeptide (Lys-Gly) (interchain with G-Cter in SUMO2). 2 consecutive C2H2-type zinc fingers follow at residues 1016-1038 (FECV…LQIH) and 1044-1066 (FECD…KKCH).

It belongs to the krueppel C2H2-type zinc-finger protein family. As to quaternary structure, part of a transcription inhibitory ribonucleoprotein complex composed at least of the circular RNA circZNF827, HNRNPK and HNRNPL. Interacts with the nucleosome remodeling and histone deacetylase/NuRD complex. Interacts with RBBP4; the interaction is direct and recruits RBBP4, a component of the NuRD complex, to telomeres.

It is found in the nucleus. The protein resides in the chromosome. Its subcellular location is the telomere. In terms of biological role, as part of a ribonucleoprotein complex composed at least of HNRNPK, HNRNPL and the circular RNA circZNF827 that nucleates the complex on chromatin, may negatively regulate the transcription of genes involved in neuronal differentiation. Could also recruit the nucleosome remodeling and histone deacetylase/NuRD complex to telomeric regions of chromosomes to regulate chromatin remodeling as part of telomere maintenance. In Mus musculus (Mouse), this protein is Zinc finger protein 827 (Znf827).